The following is a 1282-amino-acid chain: MTSLFDALSRSNDRLPSPNFLPEDFLELLKSNDFDTKLTTLIRAATIAKREEDWFHKFQKKGELFKCIDKIICDDRWELQHQCIKFLVEAMPTFGSATEYCMCFVMPNLIPKLVSNKVTVRKITHQAIATFLRLKPEALQSFLKMLSNFMPNCNSKSELITELHHILIPELVKSNWTCLVENFTTESNIQGCEDQAGVLMKKLHYFIGNEFWQKIITNLSPEKREVLEQITANVQVEHTESKAGSGVLRASAKPQSGGERRLRFGIVPSLVCALIAEDTDANQRISGLEKMKQVVDQITPEEIARLVPHLHSYLLMLSNVLEDLNFKVVVLALDIVRATGHHLKGHMEAHIQQFVNLVAKHFGNQKSVIKQIIMMTFMELFQNINPKTVGGCLRVFLENKNSRVREEVINIYTASLMTISPSKFNLQPLVNILVPMFHDVKKRVRLAAFEQLSVLAYLLNGKTEIIMKPVRDFEQDQNSRGLTEAVTARIRRQVLPRIRYDGLIEYSTPPMMDSFDLAEAEMSLPSNADLSWIVSNGGVEPDPFERTMSPISLAGNLATIRRNRVIQQQGQAEKPSFSLPQQPAQQASHQAQRLPNGIEKSHETSENSSLDIGQRIVMTRMKSDDSFVRRQGSAASNPNSSTSSWEAPKRPPISPSEKSSISATKKEVNNNHIVKKGNLKSMRARSDTNLSEDHGEEEMENDPPRSFDDRPAKASGQYSFQDFDAAIVPSSMGKKSISHHSLPITSHPPLKHAISQPQKRINNNGTFLRSGQGQRTKSVSKPHRELTAVSKTYSLLDTSNMSVNQALKKMSSDEWADKVDGLNMISTLSETQPRMVADNLKEVIIAILNECKNLRSSVSRVAIVTIGTVAQNLNSKIDSEMEKICAVLLSKSGDVSNAFIRDDATDSLNKLVKAATAGKALQGIILAGAKSKNNTIRSSCANFVYDIITIQGSSAILNNQNALSNVLPVLLQFSRDQSPQVRNPGKQSLCFLSKDPNFDRLMRKNALESEIKAVKDVLANVEKRGGVDSLESTANLSGSLSRIGSTRRVQKKLPDSLQLDLDEIRTELLAAGWERRLTGLQRFEEMCGHASKAVASDTRLIEAFISRLGDTNGKVASCAMETYISTMGSMAKLYSTESNLKAVMNQLAHALTAHLSSKSEEHKHLARTCIQHTIRSIEPVSLLPAMTSATKKSNVKQRPFILTQYCELSKLAYKSKPKQVEVMALPLLWDSVKNSAPDVDNKKATQYLAKTLAKLIGEKQLLDLATSELDPNRKKQLDALIR.

TOG stretches follow at residues 33–240 (DFDT…EHTE) and 268–515 (PSLV…MDSF). 8 HEAT repeats span residues 59–96 (QKKGELFKCIDKIICDDRWELQHQCIKFLVEAMPTFGS), 100–137 (YCMCFVMPNLIPKLVSNKVTVRKITHQAIATFLRLKPE), 162–209 (ELHH…FIGN), 261–300 (RLRFGIVPSLVCALIAEDTDANQRISGLEKMKQVVDQITP), 308–345 (PHLHSYLLMLSNVLEDLNFKVVVLALDIVRATGHHLKG), 349–386 (AHIQQFVNLVAKHFGNQKSVIKQIIMMTFMELFQNINP), 388–421 (TVGGCLRVFLENKNSRVREEVINIYTASLMTISP), and 424–461 (FNLQPLVNILVPMFHDVKKRVRLAAFEQLSVLAYLLNG). The disordered stretch occupies residues 566–714 (IQQQGQAEKP…RSFDDRPAKA (149 aa)). Low complexity-rich tracts occupy residues 575 to 592 (PSFSLPQQPAQQASHQAQ) and 633 to 644 (SAASNPNSSTSS). Residues 702–712 (DPPRSFDDRPA) are compositionally biased toward basic and acidic residues. TOG regions lie at residues 800-1022 (NMSV…ANVE) and 1066-1282 (TELL…ALIR). HEAT repeat units lie at residues 838 to 875 (DNLKEVIIAILNECKNLRSSVSRVAIVTIGTVAQNLNS), 879 to 917 (SEMEKICAVLLSKSGDVSNAFIRDDATDSLNKLVKAATA), 919 to 953 (KALQGIILAGAKSKNNTIRSSCANFVYDIITIQGS), 961 to 998 (NALSNVLPVLLQFSRDQSPQVRNPGKQSLCFLSKDPNF), 1095 to 1132 (ASDTRLIEAFISRLGDTNGKVASCAMETYISTMGSMAK), 1177 to 1214 (IEPVSLLPAMTSATKKSNVKQRPFILTQYCELSKLAYK), and 1219 to 1258 (QVEVMALPLLWDSVKNSAPDVDNKKATQYLAKTLAKLIGE).

It belongs to the Crescerin family. In terms of tissue distribution, detected in a subset of amphid neurons that lack wing- or finger-like ciliary extensions. Likewise, detected in phasmid neurons.

It is found in the cell projection. It localises to the cilium. The protein localises to the perikaryon. The protein resides in the dendrite. Required for normal structure and function of sensory cilia on amphid neurons, especially for the formation of distal ciliary structures, but is less important for normal assembly of middle and basal ciliary structures. Plays a role in the organization of axoneme microtubule bundles in sensory cilia. Required for normal structure and function of the ASER neuron that mediates attraction to NaCl. Required for normal chemotaxis to NaCl. Required for normal avoidance response to high osmolarity. In contrast, is not required for normal chemotaxis to isoamyl alcohol. Does not play a role in intraflagella transport (IFT). Promotes dauer formation in response to pheromones such as the ascarosides ascr#2, ascr#3, ascr#5, ascr#8 and icas#9. The protein is Crescerin-like protein che-12 of Caenorhabditis elegans.